Consider the following 120-residue polypeptide: U13-lycotoxin-Ls1a (120 aa).

The N-terminal stretch at 1-16 (MKILFVLISILYAVYC) is a signal peptide. The propeptide occupies 17–54 (FSSEEDVDSAYLANELEPVEDINSEQYAALEPKEEQER). 4 disulfide bridges follow: cysteine 56-cysteine 70, cysteine 63-cysteine 76, cysteine 69-cysteine 87, and cysteine 78-cysteine 85. One can recognise an Agouti domain in the interval 56-95 (CADMGQDCKDDCDCCLNIATCNCWFGRYFCSCTFGDYQTC).

It belongs to the neurotoxin 05 (agouti) family. Post-translationally, contains 6 disulfide bonds. As to expression, expressed by the venom gland.

It is found in the secreted. This chain is U13-lycotoxin-Ls1a, found in Lycosa singoriensis (Wolf spider).